A 1206-amino-acid polypeptide reads, in one-letter code: DNA polymerase (1206 aa).

The protein belongs to the DNA polymerase type-B family.

It catalyses the reaction DNA(n) + a 2'-deoxyribonucleoside 5'-triphosphate = DNA(n+1) + diphosphate. This Pyramimonas orientalis virus (PoV01) protein is DNA polymerase (dpo).